Reading from the N-terminus, the 355-residue chain is MSTFKPLVFSGVQPTGNLHLGNYLGAIKRWVEVQKTEECIYCVVDMHALTVSPDPVELMQSTREVTAAFLAAGIDPKKSIVFNQSRVMQHAELAWVFNCVARIGWMSRMTQFKDKAGKDRENASLGLFAYPSLMAADILLYRATAVPVGEDQKQHLELTRDIAQKFNNDYSDRIASLGVGVDMKVGDEQVSGFFPLTEPMISGPAMRIMSLRDGTKKMSKSDPSDLSRINLIDDEDTITKKIRKAKTDSDGLPSEVDGLEGRPEADNLVGIYAALSSTTKEDVLKEFGGRQFSDLKASLADLAVARLSPITHEMRRLVADPAHIDSVLRDGGEQAGAIAEQTMRHVRDIVGWLQN.

ATP-binding positions include 13-15 (QPT) and 21-22 (GN). The 'HIGH' region motif lies at 14-22 (PTGNLHLGN). Asp137 provides a ligand contact to L-tryptophan. Residues 149–151 (GED), Ile208, and 217–221 (KMSKS) each bind ATP. The 'KMSKS' region signature appears at 217-221 (KMSKS).

This sequence belongs to the class-I aminoacyl-tRNA synthetase family. In terms of assembly, homodimer.

The protein localises to the cytoplasm. It carries out the reaction tRNA(Trp) + L-tryptophan + ATP = L-tryptophyl-tRNA(Trp) + AMP + diphosphate + H(+). In terms of biological role, catalyzes the attachment of tryptophan to tRNA(Trp). The chain is Tryptophan--tRNA ligase from Brucella melitensis biotype 1 (strain ATCC 23456 / CCUG 17765 / NCTC 10094 / 16M).